Consider the following 153-residue polypeptide: Ribosome maturation factor RimP (153 aa).

Belongs to the RimP family.

The protein resides in the cytoplasm. In terms of biological role, required for maturation of 30S ribosomal subunits. The polypeptide is Ribosome maturation factor RimP (Marinobacter nauticus (strain ATCC 700491 / DSM 11845 / VT8) (Marinobacter aquaeolei)).